The following is a 1392-amino-acid chain: Leucine-rich PPR motif-containing protein, mitochondrial (1392 aa).

The transit peptide at 1–59 (MAALLRPARWLLGAAAAPRLPLSLRLPAGVPGRLSSVVRVAAVGSRPAAGERLSQARLY) directs the protein to the mitochondrion. PPR repeat units follow at residues 125–159 (LLRS…GVVY), 160–194 (DVSH…NIQP), 195–229 (NRVT…DLPI), 230–264 (TEAV…GIEP), 265–299 (GPDT…DHYF), 300–334 (MDRD…RRSI), 402–436 (HSSS…GFPI), 437–471 (RPHY…GVDP), 677–708 (VGSA…ESDM), 709–745 (VIGG…SAIL), 746–783 (DTAK…IKDA), 784–820 (TVLS…AKPS), 821–856 (SNIS…VLPR), and 953–987 (RDQM…NIIP). Lys-151, Lys-186, and Lys-225 each carry N6-acetyllysine. An N6-acetyllysine modification is found at Lys-291. Lys-462 carries the post-translational modification N6-acetyllysine. Position 749 is an N6-acetyllysine (Lys-749). Residues 931–1050 (ASNQVEALEK…NCKLKKSKDA (120 aa)) form an RNA-binding region. Ser-1025, Ser-1026, and Ser-1028 each carry phosphoserine. PPR repeat units follow at residues 1030-1064 (GEDV…NVVF), 1065-1101 (SSET…GFTL), 1102-1136 (NDAA…KQVP), 1137-1175 (SQIA…LSKM), 1176-1210 (VFIN…QAIE), and 1315-1349 (NDKV…NLKL). Position 1137 is a phosphoserine (Ser-1137).

In terms of assembly, component of mRNP complexes associated with HNRPA1. Component of the complex, at least composed of LRPPRC, BECN1 and BCL2; the interactions prevent BECN1 from forming an autophagy-inducing complex with PIK3C3. Interacts with CECR2, HEBP2, MAP1S and UXT. Interacts with PPARGC1A. Interacts with FOXO1. Interacts (via N-terminus) with EIF4E; the interaction promotes association of EIF4E with 4ESE-containing mRNAs. Interacts with exportin XPO1/CRM1; interacts both alone and in complex with EIF4E and 4ESE-containing mRNAs to form an EIF4E-dependent mRNA export complex. Interacts with importin IPO8; the interaction occurs when LRPPRC is in its RNA-free form and returns LRPPRC to the nucleus for further export rounds. Interacts with BECN1. In terms of tissue distribution, strongly expressed in heart, liver and kidney. Weakly expressed in brain, skeletal muscle and testes.

The protein localises to the mitochondrion. It localises to the nucleus. It is found in the nucleoplasm. Its subcellular location is the nucleus inner membrane. The protein resides in the nucleus outer membrane. Functionally, may play a role in RNA metabolism in both nuclei and mitochondria. In the nucleus binds to HNRPA1-associated poly(A) mRNAs and is part of nmRNP complexes at late stages of mRNA maturation which are possibly associated with nuclear mRNA export. Positively modulates nuclear export of mRNAs containing the EIF4E sensitivity element (4ESE) by binding simultaneously to both EIF4E and the 4ESE and acting as a platform for assembly for the RNA export complex. Also binds to exportin XPO1/CRM1 to engage the nuclear pore and traffic the bound mRNAs to the cytoplasm. May bind mature mRNA in the nucleus outer membrane. In mitochondria binds to poly(A) mRNA. Plays a role in translation or stability of mitochondrially encoded cytochrome c oxidase (COX) subunits. May be involved in transcription regulation. Cooperates with PPARGC1A to regulate certain mitochondrially encoded genes and gluconeogenic genes and may regulate docking of PPARGC1A to transcription factors. Seems to be involved in the transcription regulation of the multidrug-related genes MDR1 and MVP. Part of a nuclear factor that binds to the invMED1 element of MDR1 and MVP gene promoters. Binds single-stranded DNA. Required for maintaining mitochondrial potential. Suppresses the initiation of basal levels of autophagy and mitophagy by sustaining BCL2 levels. This Mus musculus (Mouse) protein is Leucine-rich PPR motif-containing protein, mitochondrial (Lrpprc).